The following is a 767-amino-acid chain: Transducin-like enhancer protein 1 (767 aa).

2 disordered regions span residues 1-26 (MFPQ…PPQS) and 200-346 (ADAE…TSAS). Composition is skewed to basic and acidic residues over residues 200–209 (ADAEHRERDP), 235–255 (RKTE…RSED), and 277–289 (NGVD…RKDP). The segment at 212–274 (SCLTLPNGER…SPHSVHSYSS (63 aa)) is CCN domain. The segment covering 294-306 (PNSMTSSSSVSPS) has biased composition (low complexity). The segment covering 324-346 (LKSSTPNSQSDLNTPGPSGTSAS) has biased composition (polar residues). 6 WD repeats span residues 467-498 (GIPR…HVYT), 525-555 (NRDN…SIWD), 569-599 (SSAP…VVWD), 611-641 (GHTD…RCWD), 693-723 (LHES…NAWR), and 734-764 (KESS…TVYE).

It belongs to the WD repeat Groucho/TLE family. Post-translationally, ubiquitinated by XIAP/BIRC4. Abundantly expressed in brain, lung, testis and ovary in comparison with liver, heart, kidney and spleen. Ubiquitously expressed in the developing embryo. Present in unfertilized and fertilized eggs.

It localises to the nucleus. Functionally, nuclear effector molecule. This chain is Transducin-like enhancer protein 1 (esg1), found in Xenopus laevis (African clawed frog).